We begin with the raw amino-acid sequence, 476 residues long: MAAVSAHMQDIKIQDQSDDDPYSPNTRDTTSPECHDDEKSEDISIRSSSFSIHNVLRRSGTTAALTMSFRRKSSWRIPNFDDRNTESVSPVVEVNEREISVDDGNSCCSDDTVLSVGNEAPVSNYEEKASQNTHQELTSFKHIQTHLSAISQLSQNMNVAQPLLLRPSPINPNPIMFLNQPLLFQSPILSQDLKGMPNRQTANVISPTFGLNFGMRLKANHETRTRSDENRYSKPEESRDYINQNCLKFSIDNILKADFGRRITDPLHKRKVKTRYEAKPAPAKDTAAFAPKLDEARVPDIKTPDKAGAIDLSKDDSGSNSGSTSGATSGDSPMVWPAWVYCTRYSDRPSSGRSPRTRRPKKPPGDTASNDEKRPRTAFSGPQLARLKHEFAENRYLTERRRQSLAAELGLAEAQIKIWFQNKRAKIKKASGQRNPLALQLMAQGLYNHSTVPLTKEEEELEMKARERERELKNRC.

Disordered stretches follow at residues 1-43 (MAAV…SEDI), 273-331 (KTRY…TSGD), and 347-381 (DRPS…AFSG). Positions 23-32 (SPNTRDTTSP) are enriched in polar residues. 2 stretches are compositionally biased toward basic and acidic residues: residues 33 to 43 (ECHDDEKSEDI) and 292 to 305 (KLDE…KTPD). Residues 318-331 (GSNSGSTSGATSGD) are compositionally biased toward low complexity. Positions 372-431 (EKRPRTAFSGPQLARLKHEFAENRYLTERRRQSLAAELGLAEAQIKIWFQNKRAKIKKAS) form a DNA-binding region, homeobox.

The protein belongs to the engrailed homeobox family. In terms of tissue distribution, expressed in the middle silk gland but not in the posterior silk gland during the fourth molt/fifth intermolt period.

It localises to the nucleus. In terms of biological role, this protein might be involved in the compartmentalization of the silk gland. This chain is Homeobox protein invected (INV), found in Bombyx mori (Silk moth).